The chain runs to 217 residues: Transmembrane protein 247 (217 aa).

A compositionally biased stretch (basic and acidic residues) spans methionine 1–glutamate 10. The interval methionine 1 to glycine 87 is disordered. The stretch at arginine 109–threonine 154 forms a coiled coil. Transmembrane regions (helical) follow at residues leucine 165–isoleucine 185 and isoleucine 192–isoleucine 212.

It is found in the membrane. The chain is Transmembrane protein 247 from Bos taurus (Bovine).